Here is a 403-residue protein sequence, read N- to C-terminus: 8-amino-7-oxononanoate synthase (403 aa).

Position 30 (R30) interacts with substrate. Position 121 to 122 (121 to 122) interacts with pyridoxal 5'-phosphate; the sequence is GY. H146 is a substrate binding site. Pyridoxal 5'-phosphate contacts are provided by S192, H220, and T248. The residue at position 251 (K251) is an N6-(pyridoxal phosphate)lysine. A substrate-binding site is contributed by T367.

The protein belongs to the class-II pyridoxal-phosphate-dependent aminotransferase family. BioF subfamily. As to quaternary structure, homodimer. It depends on pyridoxal 5'-phosphate as a cofactor.

It catalyses the reaction 6-carboxyhexanoyl-[ACP] + L-alanine + H(+) = (8S)-8-amino-7-oxononanoate + holo-[ACP] + CO2. It participates in cofactor biosynthesis; biotin biosynthesis. Its function is as follows. Catalyzes the decarboxylative condensation of pimeloyl-[acyl-carrier protein] and L-alanine to produce 8-amino-7-oxononanoate (AON), [acyl-carrier protein], and carbon dioxide. The polypeptide is 8-amino-7-oxononanoate synthase (Burkholderia vietnamiensis (strain G4 / LMG 22486) (Burkholderia cepacia (strain R1808))).